Here is a 289-residue protein sequence, read N- to C-terminus: NFIL3 like protein (289 aa).

The disordered stretch occupies residues 1–27; that stretch reads MDVGFSGLPDVSQSHSKTLWGARGRGP. In terms of domain architecture, bZIP spans 42-105; the sequence is DTVYWEKRRK…GLLPLTGGPR (64 aa). The segment at 48–64 is basic motif; sequence KRRKNNEAAKRSREKRR. The interval 70-91 is leucine-zipper; sequence IEGRLAALMEENALLKGELKAL.

It belongs to the bZIP family. NFIL3 subfamily.

It localises to the nucleus. In Homo sapiens (Human), this protein is NFIL3 like protein.